The sequence spans 88 residues: HssA/B-like protein 9 (88 aa).

The segment covering 1–14 has biased composition (polar residues); that stretch reads MSILSALTSISNPM. The interval 1-26 is disordered; sequence MSILSALTSISNPMKSSKSSVANGGG.

Belongs to the hssA/B family.

The chain is HssA/B-like protein 9 (hssl9) from Dictyostelium discoideum (Social amoeba).